We begin with the raw amino-acid sequence, 130 residues long: Small ribosomal subunit protein uS11 (130 aa).

Belongs to the universal ribosomal protein uS11 family. As to quaternary structure, part of the 30S ribosomal subunit. Interacts with proteins S7 and S18. Binds to IF-3.

In terms of biological role, located on the platform of the 30S subunit, it bridges several disparate RNA helices of the 16S rRNA. Forms part of the Shine-Dalgarno cleft in the 70S ribosome. The protein is Small ribosomal subunit protein uS11 of Shewanella baltica (strain OS223).